The primary structure comprises 370 residues: ABSCISIC ACID-INSENSITIVE 5-like protein 8 (370 aa).

Phosphoserine occurs at positions 25, 44, and 69. Residues 56 to 77 form a disordered region; the sequence is SAEETQEGSQRQGSTTLPPTLS. The span at 62-77 shows a compositional bias: polar residues; it reads EGSQRQGSTTLPPTLS. T111 carries the phosphothreonine modification. The segment covering 260-278 has biased composition (polar residues); it reads ESSLLSPSPYISNGSTSTR. Positions 260–281 are disordered; the sequence is ESSLLSPSPYISNGSTSTRGGK. Residues 293 to 356 form the bZIP domain; the sequence is VDKKLRRKIK…MEPGMISLHE (64 aa). Residues 295-314 are basic motif; that stretch reads KKLRRKIKNRESAARSRARK. The segment at 328 to 342 is leucine-zipper; it reads LKKDYEELLKQHVEL. A disordered region spans residues 349 to 370; the sequence is PGMISLHERPERKLRRTKSDIK. Over residues 354-370 the composition is skewed to basic and acidic residues; it reads LHERPERKLRRTKSDIK.

The protein belongs to the bZIP family. ABI5 subfamily. DNA-binding heterodimer.

Its subcellular location is the nucleus. Could participate in abscisic acid-regulated gene expression. This is ABSCISIC ACID-INSENSITIVE 5-like protein 8 (BZIP15) from Arabidopsis thaliana (Mouse-ear cress).